The chain runs to 352 residues: Popeye domain-containing protein 1 (352 aa).

Over 1–38 the chain is Extracellular; sequence MSNTTSALPSSVPAVSLDPNATLCQDWEQSHHLLFHLA. Asn3 and Asn20 each carry an N-linked (GlcNAc...) asparagine glycan. The helical transmembrane segment at 39–59 threads the bilayer; sequence NLSLGLGFLIPTTLALHMIFL. Position 60 (Arg60) is a topological domain, cytoplasmic. A helical membrane pass occupies residues 61-81; the sequence is LLLMTGCSLFIAWATLYRCTL. A topological domain (extracellular) is located at residue Asp82. The helical transmembrane segment at 83–103 threads the bilayer; the sequence is VMVWNVVFLLVNFMHFFFLLY. Over 104–352 the chain is Cytoplasmic; it reads KRRPIKIDRE…NVSKTTKKDI (249 aa). The tract at residues 299-352 is disordered; sequence ILRGGSTGSSLQKNPLTKTSTTMKPIEEGLEDDVFESESPTTSQNVSKTTKKDI. Composition is skewed to polar residues over residues 306-321 and 336-346; these read GSSL…STTM and ESPTTSQNVSK.

Belongs to the popeye family. As to expression, expressed in skeletal muscle (at protein level).

The protein localises to the lateral cell membrane. It is found in the cell junction. The protein resides in the tight junction. Its subcellular location is the membrane. It localises to the cell membrane. The protein localises to the sarcolemma. It is found in the caveola. In terms of biological role, cell adhesion molecule involved in the establishment and/or maintenance of cell integrity. Involved in skeletal muscle and heart development as well as in the maintenance of heart function. May play a role in vamp3-mediated vesicular transport and recycling of receptor molecules. Involved in the formation and regulation of the tight junction (TJ) paracellular permeability barrier in epithelial cells. May induce primordial adhesive contact and aggregation of epithelial cells in a Ca(2+)-independent manner. May be involved in epithelial movement during corneal sheet formation and regeneration. May play a role in the regulation of cell shape and movement by modulating the Rho-GTPase activity. May also be involved in striated muscle regeneration and in the regulation of cell spreading. The polypeptide is Popeye domain-containing protein 1 (popdc1) (Danio rerio (Zebrafish)).